A 465-amino-acid polypeptide reads, in one-letter code: ATP synthase subunit beta (465 aa).

G148–T155 contributes to the ATP binding site.

It belongs to the ATPase alpha/beta chains family. In terms of assembly, F-type ATPases have 2 components, CF(1) - the catalytic core - and CF(0) - the membrane proton channel. CF(1) has five subunits: alpha(3), beta(3), gamma(1), delta(1), epsilon(1). CF(0) has three main subunits: a(1), b(2) and c(9-12). The alpha and beta chains form an alternating ring which encloses part of the gamma chain. CF(1) is attached to CF(0) by a central stalk formed by the gamma and epsilon chains, while a peripheral stalk is formed by the delta and b chains.

It localises to the cell inner membrane. The catalysed reaction is ATP + H2O + 4 H(+)(in) = ADP + phosphate + 5 H(+)(out). Produces ATP from ADP in the presence of a proton gradient across the membrane. The catalytic sites are hosted primarily by the beta subunits. This chain is ATP synthase subunit beta, found in Chromobacterium violaceum (strain ATCC 12472 / DSM 30191 / JCM 1249 / CCUG 213 / NBRC 12614 / NCIMB 9131 / NCTC 9757 / MK).